The following is a 1450-amino-acid chain: DNA-directed RNA polymerase RPB1 homolog (1450 aa).

The protein belongs to the RNA polymerase beta' chain family. In terms of assembly, part of the viral DNA-directed RNA polymerase that consists of 8 polII-like subunits (RPB1, RPB2, RPB3, RPB5, RPB6, RPB7, RPB9, RPB10), a capping enzyme and a termination factor.

It localises to the virion. The catalysed reaction is RNA(n) + a ribonucleoside 5'-triphosphate = RNA(n+1) + diphosphate. Functionally, catalytic component of the DNA-directed RNA polymerase (RNAP) that catalyzes the transcription in the cytoplasm of viral DNA into RNA using the four ribonucleoside triphosphates as substrates. Forms the polymerase active center together with RPB2. Part of the core element with the central large cleft, the clamp element that moves to open and close the cleft and the jaws that are thought to grab the incoming DNA template. In African swine fever virus (strain Badajoz 1971 Vero-adapted) (Ba71V), this protein is DNA-directed RNA polymerase RPB1 homolog.